Consider the following 332-residue polypeptide: 2,3-diketo-L-gulonate reductase (332 aa).

His-44 (proton donor) is an active-site residue. NAD(+) contacts are provided by residues 168–174 (ITMIDMS), 224–225 (WK), and 304–306 (GHE).

This sequence belongs to the LDH2/MDH2 oxidoreductase family. DlgD subfamily. As to quaternary structure, homodimer.

It localises to the cytoplasm. The enzyme catalyses 3-dehydro-L-gulonate + NAD(+) = 2,3-dioxo-L-gulonate + NADH + H(+). It carries out the reaction 3-dehydro-L-gulonate + NADP(+) = 2,3-dioxo-L-gulonate + NADPH + H(+). Catalyzes the reduction of 2,3-diketo-L-gulonate in the presence of NADH, to form 3-keto-L-gulonate. In Citrobacter koseri (strain ATCC BAA-895 / CDC 4225-83 / SGSC4696), this protein is 2,3-diketo-L-gulonate reductase.